The following is a 245-amino-acid chain: Nicotinamide/nicotinic acid mononucleotide adenylyltransferase 3 (245 aa).

NAD(+) contacts are provided by Ser14 and Phe15. ATP-binding residues include His22 and Lys56. Residues Trp90, Thr93, Gly134, and Asp136 each contribute to the NAD(+) site. Lys139 contacts ATP. Residues Leu146, Trp147, Arg166, and Asn197 each coordinate NAD(+). 202 to 205 (TYVR) provides a ligand contact to ATP.

This sequence belongs to the eukaryotic NMN adenylyltransferase family. Homotetramer. It depends on Mg(2+) as a cofactor.

The protein localises to the mitochondrion. It catalyses the reaction beta-nicotinamide D-ribonucleotide + ATP + H(+) = diphosphate + NAD(+). The enzyme catalyses nicotinate beta-D-ribonucleotide + ATP + H(+) = deamido-NAD(+) + diphosphate. Its pathway is cofactor biosynthesis; NAD(+) biosynthesis; NAD(+) from nicotinamide D-ribonucleotide: step 1/1. It functions in the pathway cofactor biosynthesis; NAD(+) biosynthesis; deamido-NAD(+) from nicotinate D-ribonucleotide: step 1/1. Activity is strongly inhibited by galotannin. Inhibited by P1-(adenosine-5')-P4-(nicotinic-acid-riboside-5')-tetraphosphate (Nap4AD). Functionally, catalyzes the formation of NAD(+) from nicotinamide mononucleotide (NMN) and ATP. Can also use the deamidated form; nicotinic acid mononucleotide (NaMN) as substrate with the same efficiency. Can use triazofurin monophosphate (TrMP) as substrate. Can also use GTP and ITP as nucleotide donors. Also catalyzes the reverse reaction, i.e. the pyrophosphorolytic cleavage of NAD(+). For the pyrophosphorolytic activity, can use NAD(+), NADH, NaAD, nicotinic acid adenine dinucleotide phosphate (NHD), nicotinamide guanine dinucleotide (NGD) as substrates. Fails to cleave phosphorylated dinucleotides NADP(+), NADPH and NaADP(+). Protects against axonal degeneration following injury. May be involved in the maintenance of axonal integrity. Also functions as a stress-response chaperone protein that prevents toxic aggregation of proteins; this function may be independent of its NAD(+) synthesis activity. The polypeptide is Nicotinamide/nicotinic acid mononucleotide adenylyltransferase 3 (Mus musculus (Mouse)).